The following is a 585-amino-acid chain: Auxin response factor 17 (585 aa).

The segment at residues 119–221 (FAKILTPSDA…EMFIGVRRTP (103 aa)) is a DNA-binding region (TF-B3). Disordered regions lie at residues 483 to 517 (EMMN…RGPL) and 535 to 585 (EHSE…SSQG). Residues 488–510 (GSPPSDNLSPNSNTTNLSSGNDL) are compositionally biased toward low complexity. A compositionally biased stretch (polar residues) spans 573–585 (KHSNSNAGSSSQG).

The protein belongs to the ARF family. In terms of assembly, homo and heterodimers.

The protein resides in the nucleus. In terms of biological role, auxin response factors (ARFs) are transcriptional factors that bind specifically to the DNA sequence 5'-TGTCTC-3' found in the auxin-responsive promoter elements (AuxREs). Could act as transcriptional activator or repressor. Formation of heterodimers with Aux/IAA proteins may alter their ability to modulate early auxin response genes expression. The sequence is that of Auxin response factor 17 (ARF17) from Arabidopsis thaliana (Mouse-ear cress).